The primary structure comprises 227 residues: ATP-dependent dethiobiotin synthetase BioD (227 aa).

13–18 is a binding site for ATP; the sequence is DVGKTV. A Mg(2+)-binding site is contributed by Thr-17. The active site involves Lys-38. Residues Asp-55, 116–119, and 176–177 contribute to the ATP site; these read EGAG and NR. Residues Asp-55 and Glu-116 each coordinate Mg(2+).

This sequence belongs to the dethiobiotin synthetase family. As to quaternary structure, homodimer. Requires Mg(2+) as cofactor.

The protein localises to the cytoplasm. It catalyses the reaction (7R,8S)-7,8-diammoniononanoate + CO2 + ATP = (4R,5S)-dethiobiotin + ADP + phosphate + 3 H(+). It functions in the pathway cofactor biosynthesis; biotin biosynthesis; biotin from 7,8-diaminononanoate: step 1/2. Its function is as follows. Catalyzes a mechanistically unusual reaction, the ATP-dependent insertion of CO2 between the N7 and N8 nitrogen atoms of 7,8-diaminopelargonic acid (DAPA, also called 7,8-diammoniononanoate) to form a ureido ring. This Aliivibrio salmonicida (strain LFI1238) (Vibrio salmonicida (strain LFI1238)) protein is ATP-dependent dethiobiotin synthetase BioD.